The chain runs to 408 residues: BRCA1-A complex subunit Abraxas 1 (408 aa).

In terms of domain architecture, MPN spans 7–155 (TAVISGFVFG…KSTHRLEYAL (149 aa)). Residues 210 to 272 (ALAEVNRISD…MEEKGNKVSE (63 aa)) adopt a coiled-coil conformation. Positions 335–408 (HRRQAGKRKA…EVSRSKSPTF (74 aa)) are disordered. Basic residues predominate over residues 337–358 (RQAGKRKAHSKQLGKTSTKKSR). The segment covering 394–408 (QSLNVEVSRSKSPTF) has biased composition (polar residues). Ser405 is modified (phosphoserine). Residues 405 to 408 (SPTF) carry the pSXXF motif motif.

It belongs to the FAM175 family. Abraxas subfamily. In terms of assembly, component of the BRCA1-A complex. Component of the BRISC complex. Homodimer. Interacts directly (when phosphorylated at Ser-405) with brca1. The phosphorylated homodimer can interact directly with two brca1 chains, giving rise to a heterotetramer. Phosphorylation of Ser-405 of the pSXXF motif by ATM or ATR constitutes a specific recognition motif for the BRCT domain of BRCA1.

It localises to the nucleus. Involved in DNA damage response and double-strand break (DSB) repair. Component of the BRCA1-A complex, acting as a central scaffold protein that assembles the various components of the complex and mediates the recruitment of brca1. The BRCA1-A complex specifically recognizes 'Lys-63'-linked ubiquitinated histones H2A and H2AX at DNA lesion sites, leading to target the brca1-bard1 heterodimer to sites of DNA damage at DSBs. This complex also possesses deubiquitinase activity that specifically removes 'Lys-63'-linked ubiquitin on histones H2A and H2AX. This Xenopus laevis (African clawed frog) protein is BRCA1-A complex subunit Abraxas 1.